A 280-amino-acid chain; its full sequence is Cytochrome c1 (280 aa).

Residues 1–21 (MKKLLISAVSALVLGSGAALA) form the signal peptide. Heme c is bound by residues C55, C58, H59, and M205. The chain crosses the membrane as a helical span at residues 249-267 (MGLVAVVMLGLLSVMLYLT).

As to quaternary structure, the main subunits of complex b-c1 are: cytochrome b, cytochrome c1 and the Rieske protein. In terms of processing, binds 1 heme c group covalently per subunit.

Its subcellular location is the cell membrane. Functionally, component of the ubiquinol-cytochrome c reductase complex (complex III or cytochrome b-c1 complex), which is a respiratory chain that generates an electrochemical potential coupled to ATP synthesis. c1 functions as an electron donor to cytochrome c. This chain is Cytochrome c1 (petC), found in Rhodobacter capsulatus (Rhodopseudomonas capsulata).